A 37-amino-acid chain; its full sequence is Protamine Z3 (37 aa).

The segment at 1–37 (ARSRSRRSYGRGRRRGGRRRRRRRRRRRGGRRGRRSR) is disordered.

Testis.

The protein resides in the nucleus. The protein localises to the chromosome. Protamines substitute for histones in the chromatin of sperm during the haploid phase of spermatogenesis. They compact sperm DNA into a highly condensed, stable and inactive complex. This Scyliorhinus canicula (Small-spotted catshark) protein is Protamine Z3.